Reading from the N-terminus, the 461-residue chain is Cysteine--tRNA ligase (461 aa).

Cysteine 28 contacts Zn(2+). The 'HIGH' region motif lies at 30 to 40 (VTIYDLCHIGH). Zn(2+) is bound by residues cysteine 209, histidine 234, and glutamate 238. A 'KMSKS' region motif is present at residues 266–270 (KMSKS). Residue lysine 269 coordinates ATP.

It belongs to the class-I aminoacyl-tRNA synthetase family. As to quaternary structure, monomer. The cofactor is Zn(2+).

Its subcellular location is the cytoplasm. It carries out the reaction tRNA(Cys) + L-cysteine + ATP = L-cysteinyl-tRNA(Cys) + AMP + diphosphate. The protein is Cysteine--tRNA ligase of Serratia proteamaculans (strain 568).